We begin with the raw amino-acid sequence, 333 residues long: Phenylalanine--tRNA ligase alpha subunit (333 aa).

Position 254 (E254) interacts with Mg(2+).

Belongs to the class-II aminoacyl-tRNA synthetase family. Phe-tRNA synthetase alpha subunit type 1 subfamily. Tetramer of two alpha and two beta subunits. It depends on Mg(2+) as a cofactor.

It localises to the cytoplasm. The catalysed reaction is tRNA(Phe) + L-phenylalanine + ATP = L-phenylalanyl-tRNA(Phe) + AMP + diphosphate + H(+). This Xylella fastidiosa (strain M12) protein is Phenylalanine--tRNA ligase alpha subunit.